Here is a 497-residue protein sequence, read N- to C-terminus: Glycine receptor subunit beta (497 aa).

The N-terminal stretch at 1 to 22 is a signal peptide; sequence MKFLLTTAFLILISLWVEEAYS. At 23 to 268 the chain is on the extracellular side; sequence KEKSSKKGKG…IFTLRRQVGF (246 aa). Asparagine 54 is a glycosylation site (N-linked (GlcNAc...) asparagine). Glycine is bound by residues arginine 108 and serine 174. The cysteines at positions 183 and 197 are disulfide-linked. A glycan (N-linked (GlcNAc...) asparagine) is linked at asparagine 242. Cysteine 243 and cysteine 255 are disulfide-bonded. Threonine 250 contacts glycine. Residues 269–289 traverse the membrane as a helical segment; the sequence is YMMGVYAPTLLIVVLSWLSFW. The Cytoplasmic portion of the chain corresponds to 290-294; the sequence is INPDA. The chain crosses the membrane as a helical span at residues 295-315; the sequence is SAARVPLGIFSVLSLASECTT. The Extracellular segment spans residues 316–327; sequence LAAELPKVSYVK. Residues 328–349 form a helical membrane-spanning segment; it reads ALDVWLIACLLFGFASLVEYAV. Residues 350-472 lie on the Cytoplasmic side of the membrane; that stretch reads VQVMLNNPKR…KPVIPTAAKR (123 aa). The residue at position 391 (threonine 391) is a Phosphothreonine. A helical transmembrane segment spans residues 473 to 496; it reads IDLYARALFPFCFLFFNVIYWSIY.

It belongs to the ligand-gated ion channel (TC 1.A.9) family. Glycine receptor (TC 1.A.9.3) subfamily. GLRB sub-subfamily. In terms of assembly, forms heteropentamers with glycin receptor alpha subunits. Heteropentamers with GLRA1 can be composed of two GLRA1 and three GLRB subunits, or three GLRA1 and two GLRB subunits, or four GLRA1 subunits and one GLRB subunit. Forms heteropentamers with GLRA2. Functional GLRB-GLRA2 heteropentamers contain four GLRA2 subunits and one GLRB subunit, although alternative subunit composition cannot be excluded. Forms a heteropentamer with GLRA3. Interacts with GPHN.

It is found in the postsynaptic cell membrane. It localises to the synapse. Its subcellular location is the cell projection. The protein localises to the dendrite. The protein resides in the cell membrane. It is found in the cytoplasm. It catalyses the reaction chloride(in) = chloride(out). Its activity is regulated as follows. Channel opening is triggered by extracellular glycine. Heteropentameric channels composed of GLRB and GLRA1 are activated by lower glycine levels than homopentameric GLRA1. In terms of biological role, subunit of heteromeric glycine-gated chloride channels. Plays an important role in the down-regulation of neuronal excitability. Contributes to the generation of inhibitory postsynaptic currents. The polypeptide is Glycine receptor subunit beta (GLRB) (Homo sapiens (Human)).